The sequence spans 273 residues: Probable ribosomal RNA small subunit methyltransferase A (273 aa).

S-adenosyl-L-methionine is bound by residues Asn23, Leu25, Gly50, Glu71, Asp95, and Asn110.

This sequence belongs to the class I-like SAM-binding methyltransferase superfamily. rRNA adenine N(6)-methyltransferase family. RsmA subfamily.

Its subcellular location is the cytoplasm. In terms of biological role, specifically dimethylates two adjacent adenosines in the loop of a conserved hairpin near the 3'-end of 16S rRNA in the 30S particle. May play a critical role in biogenesis of 30S subunits. The protein is Probable ribosomal RNA small subunit methyltransferase A of Thermococcus sibiricus (strain DSM 12597 / MM 739).